We begin with the raw amino-acid sequence, 151 residues long: MYCPFCHNDQSRVIDSRVIDSGSAIRRRRECTQCKNRFTTVEKAQLLVVKRNGLTEPFSREKVIVGVRRACQGRDVSDDALKRLAQQVEERVRLHGSSQIHANEIGLAILEPLRELDEVAYLRFASVYKSFESADDFESEIRLMRRRDRSN.

A zinc finger spans residues 3–34; it reads CPFCHNDQSRVIDSRVIDSGSAIRRRRECTQC. The 91-residue stretch at 46–136 folds into the ATP-cone domain; the sequence is LLVVKRNGLT…VYKSFESADD (91 aa).

The protein belongs to the NrdR family. It depends on Zn(2+) as a cofactor.

Functionally, negatively regulates transcription of bacterial ribonucleotide reductase nrd genes and operons by binding to NrdR-boxes. The sequence is that of Transcriptional repressor NrdR from Corynebacterium diphtheriae (strain ATCC 700971 / NCTC 13129 / Biotype gravis).